The following is a 35-amino-acid chain: Conotoxin TxMEKL-0422 (35 aa).

The segment at 1-35 (NPASCCSCADVDPGRASRKTPKGEDQVFIKEKDRC) is disordered. The segment covering 21–35 (PKGEDQVFIKEKDRC) has biased composition (basic and acidic residues).

Contains disulfide bonds. As to expression, expressed by the venom duct.

It localises to the secreted. The protein is Conotoxin TxMEKL-0422 of Conus textile (Cloth-of-gold cone).